The following is a 650-amino-acid chain: Threonine--tRNA ligase (650 aa).

The TGS domain maps to 1 to 66 (MVQITLPDGS…DQDAKLAIVT (66 aa)). Residues 247–538 (DHRKIGRDLD…LIENHAGAMP (292 aa)) form a catalytic region. Zn(2+)-binding residues include Cys338, His389, and His515.

The protein belongs to the class-II aminoacyl-tRNA synthetase family. In terms of assembly, homodimer. Requires Zn(2+) as cofactor.

It is found in the cytoplasm. The enzyme catalyses tRNA(Thr) + L-threonine + ATP = L-threonyl-tRNA(Thr) + AMP + diphosphate + H(+). Catalyzes the attachment of threonine to tRNA(Thr) in a two-step reaction: L-threonine is first activated by ATP to form Thr-AMP and then transferred to the acceptor end of tRNA(Thr). Also edits incorrectly charged L-seryl-tRNA(Thr). The polypeptide is Threonine--tRNA ligase (Bordetella avium (strain 197N)).